Reading from the N-terminus, the 499-residue chain is Glycerol kinase (499 aa).

Threonine 13 is a binding site for ADP. Residues threonine 13, threonine 14, and serine 15 each contribute to the ATP site. Threonine 13 lines the sn-glycerol 3-phosphate pocket. ADP is bound at residue arginine 17. Arginine 83, glutamate 84, tyrosine 136, and aspartate 246 together coordinate sn-glycerol 3-phosphate. Residues arginine 83, glutamate 84, tyrosine 136, aspartate 246, and glutamine 247 each contribute to the glycerol site. Positions 268 and 311 each coordinate ADP. 4 residues coordinate ATP: threonine 268, glycine 311, glutamine 315, and glycine 412. ADP is bound by residues glycine 412 and asparagine 416.

It belongs to the FGGY kinase family.

The enzyme catalyses glycerol + ATP = sn-glycerol 3-phosphate + ADP + H(+). It participates in polyol metabolism; glycerol degradation via glycerol kinase pathway; sn-glycerol 3-phosphate from glycerol: step 1/1. Inhibited by fructose 1,6-bisphosphate (FBP). Key enzyme in the regulation of glycerol uptake and metabolism. Catalyzes the phosphorylation of glycerol to yield sn-glycerol 3-phosphate. This chain is Glycerol kinase, found in Francisella philomiragia subsp. philomiragia (strain ATCC 25017 / CCUG 19701 / FSC 153 / O#319-036).